The primary structure comprises 509 residues: AAA ATPase forming ring-shaped complexes (509 aa).

The stretch at 11 to 50 (AHLQRTISNLSARNAKLAELLKASRDKLSILQDQLEDLAA) forms a coiled coil. ATP is bound at residue 236 to 241 (GCGKTL).

Belongs to the AAA ATPase family. As to quaternary structure, homohexamer. Assembles into a hexameric ring structure.

This is AAA ATPase forming ring-shaped complexes from Corynebacterium diphtheriae (strain ATCC 700971 / NCTC 13129 / Biotype gravis).